The sequence spans 245 residues: MPAKLSVNLNAVAMLRNRRDLPWPSVTGLGRAALAAGAAGLTVHPRPDQRHIRFSDLGDIRALIDDEFPQAEFNIEGFPSEAFLDLVEKHQPEQVTLVPDDPTQATSDHGWDFVSRSDFLAPIVARLKAGGMRVSLFADPDPLGYERAAAIGVDRVELYTGPYGATYDDPAAATRELDRLEKAANAATALGLDINAGHDLTVDNLPALVKRIPQLSEVSIGHGLTADALMYGMPVTVSRYIAALA.

3-amino-2-oxopropyl phosphate is bound by residues Asn8 and Arg19. His44 functions as the Proton acceptor in the catalytic mechanism. 1-deoxy-D-xylulose 5-phosphate is bound by residues Arg46 and His51. Residue Glu76 is the Proton acceptor of the active site. Residue Thr106 participates in 1-deoxy-D-xylulose 5-phosphate binding. The Proton donor role is filled by His198. Residues Asp199 and Gly221–His222 contribute to the 3-amino-2-oxopropyl phosphate site.

The protein belongs to the PNP synthase family. In terms of assembly, homooctamer; tetramer of dimers.

It is found in the cytoplasm. It catalyses the reaction 3-amino-2-oxopropyl phosphate + 1-deoxy-D-xylulose 5-phosphate = pyridoxine 5'-phosphate + phosphate + 2 H2O + H(+). It participates in cofactor biosynthesis; pyridoxine 5'-phosphate biosynthesis; pyridoxine 5'-phosphate from D-erythrose 4-phosphate: step 5/5. Catalyzes the complicated ring closure reaction between the two acyclic compounds 1-deoxy-D-xylulose-5-phosphate (DXP) and 3-amino-2-oxopropyl phosphate (1-amino-acetone-3-phosphate or AAP) to form pyridoxine 5'-phosphate (PNP) and inorganic phosphate. The protein is Pyridoxine 5'-phosphate synthase of Brucella anthropi (strain ATCC 49188 / DSM 6882 / CCUG 24695 / JCM 21032 / LMG 3331 / NBRC 15819 / NCTC 12168 / Alc 37) (Ochrobactrum anthropi).